Reading from the N-terminus, the 279-residue chain is Thermitase (279 aa).

Residue Asp5 participates in Ca(2+) binding. A Peptidase S8 domain is found at 12–277; the sequence is QYGPQKIQAP…KGRVNAYKAV (266 aa). The active-site Charge relay system is Asp38. Residues Asp47, Asp57, Asp60, Asp62, Thr64, and Gln66 each coordinate Ca(2+). The active-site Charge relay system is His71. Residues Val82, Asn85, Thr87, and Ile89 each contribute to the Ca(2+) site. Na(+)-binding residues include Ala173, Tyr175, and Ala178. The Ca(2+) site is built by Val199 and Asp201. Asp201 serves as a coordination point for Na(+). The active-site Charge relay system is the Ser225.

This sequence belongs to the peptidase S8 family. Ca(2+) is required as a cofactor. The cofactor is Na(+).

The protein resides in the secreted. It catalyses the reaction Hydrolysis of proteins, including collagen.. The chain is Thermitase from Thermoactinomyces vulgaris.